The sequence spans 306 residues: tRNA N6-adenosine threonylcarbamoyltransferase (306 aa).

Positions 110 and 114 each coordinate Fe cation. Substrate contacts are provided by residues 132-136 (IASGK), Asp-165, Gly-178, Asp-182, and Asn-268. Residue Asp-292 participates in Fe cation binding.

Belongs to the KAE1 / TsaD family. Requires Fe(2+) as cofactor.

The protein resides in the cytoplasm. It catalyses the reaction L-threonylcarbamoyladenylate + adenosine(37) in tRNA = N(6)-L-threonylcarbamoyladenosine(37) in tRNA + AMP + H(+). In terms of biological role, required for the formation of a threonylcarbamoyl group on adenosine at position 37 (t(6)A37) in tRNAs that read codons beginning with adenine. Is involved in the transfer of the threonylcarbamoyl moiety of threonylcarbamoyl-AMP (TC-AMP) to the N6 group of A37, together with TsaE and TsaB. TsaD likely plays a direct catalytic role in this reaction. This chain is tRNA N6-adenosine threonylcarbamoyltransferase, found in Malacoplasma penetrans (strain HF-2) (Mycoplasma penetrans).